Consider the following 28-residue polypeptide: Conotoxin Cl6a (28 aa).

3 disulfides stabilise this stretch: Cys-3/Cys-13, Cys-7/Cys-19, and Cys-12/Cys-24.

As to expression, expressed by the venom duct.

Its subcellular location is the secreted. This Californiconus californicus (California cone) protein is Conotoxin Cl6a.